The chain runs to 240 residues: Protein OPG176 (240 aa).

It belongs to the orthopoxvirus OPG176 family. Tetramer. Interacts with host MYD88, TRF4, TICAM2 and MAL.

In terms of biological role, BCL2-like protein which disrupts the host immune response by inhibiting the TLR4 signaling pathway leading to NF-kappa-B activation. Acts close to the plasma membrane and targets several host TIR-domain containing adapter proteins including MYD88, TIRAP, TRIF and TICAM2. In turn, blocks the host NF-kappa-B and TRIF-mediated IRF3 activation. This is Protein OPG176 (OPG176) from Bos taurus (Bovine).